We begin with the raw amino-acid sequence, 482 residues long: Adenylyltransferase and sulfurtransferase uba4 (482 aa).

The segment at 33-57 (EGAALRAQSQKTASANATTGQRTKS) is disordered. The span at 39 to 54 (AQSQKTASANATTGQR) shows a compositional bias: polar residues. Residues Gly98, Asp119, 126–130 (SNLHR), Lys143, and 187–188 (DN) each bind ATP. The Zn(2+) site is built by Cys236 and Cys239. Cys253 (glycyl thioester intermediate; for adenylyltransferase activity) is an active-site residue. Zn(2+) is bound by residues Cys315 and Cys318. The 115-residue stretch at 366–480 (AGAQRHIIDV…WREQVDPDWP (115 aa)) folds into the Rhodanese domain. Cys435 (cysteine persulfide intermediate; for sulfurtransferase activity) is an active-site residue.

It in the N-terminal section; belongs to the HesA/MoeB/ThiF family. UBA4 subfamily. Requires Zn(2+) as cofactor.

The protein localises to the cytoplasm. It localises to the cytosol. It carries out the reaction [molybdopterin-synthase sulfur-carrier protein]-C-terminal Gly-Gly + ATP + H(+) = [molybdopterin-synthase sulfur-carrier protein]-C-terminal Gly-Gly-AMP + diphosphate. The enzyme catalyses [molybdopterin-synthase sulfur-carrier protein]-C-terminal Gly-Gly-AMP + S-sulfanyl-L-cysteinyl-[cysteine desulfurase] + AH2 = [molybdopterin-synthase sulfur-carrier protein]-C-terminal-Gly-aminoethanethioate + L-cysteinyl-[cysteine desulfurase] + A + AMP + 2 H(+). It participates in tRNA modification; 5-methoxycarbonylmethyl-2-thiouridine-tRNA biosynthesis. The protein operates within cofactor biosynthesis; molybdopterin biosynthesis. Functionally, plays a central role in 2-thiolation of mcm(5)S(2)U at tRNA wobble positions of cytosolic tRNA(Lys), tRNA(Glu) and tRNA(Gln). Also essential during biosynthesis of the molybdenum cofactor. Acts by mediating the C-terminal thiocarboxylation of sulfur carriers urm1 and mocs2a. Its N-terminus first activates urm1 and mocs2a as acyl-adenylates (-COAMP), then the persulfide sulfur on the catalytic cysteine is transferred to urm1 and mocs2a to form thiocarboxylation (-COSH) of their C-terminus. The reaction probably involves hydrogen sulfide that is generated from the persulfide intermediate and that acts as a nucleophile towards urm1 and mocs2a. Subsequently, a transient disulfide bond is formed. Does not use thiosulfate as sulfur donor; nfs1 probably acting as a sulfur donor for thiocarboxylation reactions. This chain is Adenylyltransferase and sulfurtransferase uba4, found in Emericella nidulans (strain FGSC A4 / ATCC 38163 / CBS 112.46 / NRRL 194 / M139) (Aspergillus nidulans).